The primary structure comprises 348 residues: Chaperone protein DnaJ (348 aa).

Positions 3–65 (DLYGILGVDH…EQRQRYDRHV (63 aa)) constitute a J domain. Residues 109-191 (GGSQVVKIDS…CYGNGSRSAP (83 aa)) form a CR-type zinc finger. Residues C122, C125, C139, C142, C165, C168, C179, and C182 each coordinate Zn(2+). 4 CXXCXGXG motif repeats span residues 122–129 (CDVCNGTR), 139–146 (CFDCNGSG), 165–172 (CSKCRGNG), and 179–186 (CRRCYGNG).

Belongs to the DnaJ family. Homodimer. Requires Zn(2+) as cofactor.

It localises to the cytoplasm. Participates actively in the response to hyperosmotic and heat shock by preventing the aggregation of stress-denatured proteins and by disaggregating proteins, also in an autonomous, DnaK-independent fashion. Unfolded proteins bind initially to DnaJ; upon interaction with the DnaJ-bound protein, DnaK hydrolyzes its bound ATP, resulting in the formation of a stable complex. GrpE releases ADP from DnaK; ATP binding to DnaK triggers the release of the substrate protein, thus completing the reaction cycle. Several rounds of ATP-dependent interactions between DnaJ, DnaK and GrpE are required for fully efficient folding. Also involved, together with DnaK and GrpE, in the DNA replication of plasmids through activation of initiation proteins. This Tropheryma whipplei (strain Twist) (Whipple's bacillus) protein is Chaperone protein DnaJ.